The chain runs to 55 residues: Large ribosomal subunit protein bL33 (55 aa).

This sequence belongs to the bacterial ribosomal protein bL33 family.

This is Large ribosomal subunit protein bL33 from Bordetella avium (strain 197N).